A 304-amino-acid polypeptide reads, in one-letter code: Porphobilinogen deaminase (304 aa).

C241 carries the S-(dipyrrolylmethanemethyl)cysteine modification.

The protein belongs to the HMBS family. In terms of assembly, monomer. Dipyrromethane serves as cofactor.

It catalyses the reaction 4 porphobilinogen + H2O = hydroxymethylbilane + 4 NH4(+). Its pathway is porphyrin-containing compound metabolism; protoporphyrin-IX biosynthesis; coproporphyrinogen-III from 5-aminolevulinate: step 2/4. Functionally, tetrapolymerization of the monopyrrole PBG into the hydroxymethylbilane pre-uroporphyrinogen in several discrete steps. The protein is Porphobilinogen deaminase of Vesicomyosocius okutanii subsp. Calyptogena okutanii (strain HA).